Here is a 441-residue protein sequence, read N- to C-terminus: Phosphoglucosamine mutase (441 aa).

Residue Ser-100 is the Phosphoserine intermediate of the active site. 4 residues coordinate Mg(2+): Ser-100, Asp-239, Asp-241, and Asp-243. At Ser-100 the chain carries Phosphoserine.

This sequence belongs to the phosphohexose mutase family. Mg(2+) serves as cofactor. Activated by phosphorylation.

It carries out the reaction alpha-D-glucosamine 1-phosphate = D-glucosamine 6-phosphate. In terms of biological role, catalyzes the conversion of glucosamine-6-phosphate to glucosamine-1-phosphate. The sequence is that of Phosphoglucosamine mutase from Ruthia magnifica subsp. Calyptogena magnifica.